The following is a 447-amino-acid chain: N-succinylarginine dihydrolase (447 aa).

Substrate contacts are provided by residues 19 to 28 (AGLSFGNEAS), Asn-110, and 137 to 138 (HR). Glu-174 is a catalytic residue. A substrate-binding site is contributed by Arg-212. His-248 is a catalytic residue. Asp-250 and Asn-359 together coordinate substrate. Cys-365 serves as the catalytic Nucleophile.

This sequence belongs to the succinylarginine dihydrolase family. In terms of assembly, homodimer.

It catalyses the reaction N(2)-succinyl-L-arginine + 2 H2O + 2 H(+) = N(2)-succinyl-L-ornithine + 2 NH4(+) + CO2. It functions in the pathway amino-acid degradation; L-arginine degradation via AST pathway; L-glutamate and succinate from L-arginine: step 2/5. Its function is as follows. Catalyzes the hydrolysis of N(2)-succinylarginine into N(2)-succinylornithine, ammonia and CO(2). This Salmonella schwarzengrund (strain CVM19633) protein is N-succinylarginine dihydrolase.